The chain runs to 354 residues: 3-isopropylmalate dehydrogenase (354 aa).

74–87 (GPKWDDLPPEKRPE) lines the NAD(+) pocket. Arg95, Arg105, Arg134, and Asp219 together coordinate substrate. Residues Asp219, Asp243, and Asp247 each coordinate Mg(2+). Residue 275 to 287 (GSAPDIAGKNIAN) participates in NAD(+) binding.

Belongs to the isocitrate and isopropylmalate dehydrogenases family. LeuB type 1 subfamily. Homodimer. The cofactor is Mg(2+). It depends on Mn(2+) as a cofactor.

It localises to the cytoplasm. The catalysed reaction is (2R,3S)-3-isopropylmalate + NAD(+) = 4-methyl-2-oxopentanoate + CO2 + NADH. Its pathway is amino-acid biosynthesis; L-leucine biosynthesis; L-leucine from 3-methyl-2-oxobutanoate: step 3/4. Catalyzes the oxidation of 3-carboxy-2-hydroxy-4-methylpentanoate (3-isopropylmalate) to 3-carboxy-4-methyl-2-oxopentanoate. The product decarboxylates to 4-methyl-2 oxopentanoate. The chain is 3-isopropylmalate dehydrogenase (leuB) from Thermotoga maritima (strain ATCC 43589 / DSM 3109 / JCM 10099 / NBRC 100826 / MSB8).